A 772-amino-acid chain; its full sequence is Endoplasmic reticulum membrane sensor NFE2L1 (772 aa).

A helical; Signal-anchor for type II membrane protein transmembrane segment spans residues 7–24; that stretch reads YLTEGLLQFTILLSLIGV. The disordered stretch occupies residues 108–148; the sequence is DPEGSVSGSQPNSGLALESSSGLQDVTGPDNGVRESETEQG. Polar residues predominate over residues 113–131; sequence VSGSQPNSGLALESSSGLQ. Residues 191–199 form a cholesterol recognition/amino acid consensus (CRAC) region region; it reads VFDYSHRQK. Residue asparagine 348 is glycosylated (N-linked (GlcNAc...) asparagine). Positions 379–383 are CPD; sequence SPEVE. Asparagine 412 and asparagine 423 each carry an N-linked (GlcNAc...) asparagine glycan. The tract at residues 470–532 is disordered; sequence EEEFDSDSGL…AVGYSSDSET (63 aa). The Destruction motif signature appears at 476-480; sequence DSGLS. Low complexity predominate over residues 476–523; sequence DSGLSLDSSHSPSSLSSSEGSSSSSSSSSSSSSSASSSASSSFSEEGA. Residue serine 528 is modified to Phosphoserine; by CK2. A Phosphoserine; by PKA modification is found at serine 599. Residues 654–717 enclose the bZIP domain; that stretch reads LIRDIRRRGK…RQMKQKVQSL (64 aa). The basic motif stretch occupies residues 656-675; that stretch reads RDIRRRGKNKMAAQNCRKRK. The leucine-zipper stretch occupies residues 682–696; sequence LERDVEDLQRDKARL. Residues 753-772 form a disordered region; sequence RTMADQQARRQERKPKDRRK. A Nuclear localization signal motif is present at residues 761 to 768; it reads RRQERKPK. The segment covering 763–772 has biased composition (basic residues); that stretch reads QERKPKDRRK.

It belongs to the bZIP family. CNC subfamily. Interacts with KEAP1. In terms of assembly, interacts (via CPD region) with FBXW7; leading to its ubiquitination and degradation. Interacts with SYVN1/HRD1; leading to its ubiquitination and degradation. Interacts (when ubiquitinated) with DDI2; leading to its cleavage. As to quaternary structure, interacts (via the bZIP domain) with small MAF protein (MAFF, MAFG or MAFK); required for binding to antioxidant response elements (AREs) on DNA. Interacts (via Destruction motif) with BTRC; leading to its ubiquitination and degradation. Interacts with CEBPB; the heterodimer represses expression of DSPP during odontoblast differentiation. Interacts with MOTS-c, a peptide produced by the mitochondrially encoded 12S rRNA MT-RNR1. Cleaved at Leu-104 by the aspartyl protease DDI2 following retrotranslocation, releasing the protein from the endoplasmic reticulum membrane and forming the transcription factor NRF1 that translocates into the nucleus. Ubiquitination is prerequisite for cleavage by aspartyl protease DDI2. Post-translationally, N-glycosylated in normal conditions, when it has a single-pass type II membrane protein topology, with the DNA-binding domain facing the endoplasmic reticulum lumen. Deglycosylated during retrotranslocation to the cytosolic side of the membrane, to have a single-pass type III membrane protein topology with the major part of the protein facing the cytosol. In terms of processing, ubiquitinated by the SCF(FBXW7) complex and SYVN1/HRD1, leading to its degradation by the proteasome. Ubiquitinated during retrotranslocation to the cytosolic side of the membrane: ubiquitination does not lead to degradation and is required for processing by the aspartyl protease DDI2 and subsequent release from the endoplasmic reticulum membrane. Phosphorylation by CK2 at Ser-528 inhibits transcription factor activity, possibly by affecting DNA-binding activity. Phosphorylation at Ser-599 is required for interaction with CEBPB. Post-translationally, ubiquitinated by the SCF(BTRC) complex in the nucleus, leading to its degradation by the proteasome.

Its subcellular location is the endoplasmic reticulum membrane. The protein resides in the nucleus. Functionally, endoplasmic reticulum membrane sensor that translocates into the nucleus in response to various stresses to act as a transcription factor. Constitutes a precursor of the transcription factor NRF1. Able to detect various cellular stresses, such as cholesterol excess, oxidative stress or proteasome inhibition. In response to stress, it is released from the endoplasmic reticulum membrane following cleavage by the protease DDI2 and translocates into the nucleus to form the transcription factor NRF1. Acts as a key sensor of cholesterol excess: in excess cholesterol conditions, the endoplasmic reticulum membrane form of the protein directly binds cholesterol via its CRAC motif, preventing cleavage and release of the transcription factor NRF1, thereby allowing expression of genes promoting cholesterol removal, such as CD36. Involved in proteasome homeostasis: in response to proteasome inhibition, it is released from the endoplasmic reticulum membrane, translocates to the nucleus and activates expression of genes encoding proteasome subunits. CNC-type bZIP family transcription factor that translocates to the nucleus and regulates expression of target genes in response to various stresses. Heterodimerizes with small-Maf proteins (MAFF, MAFG or MAFK) and binds DNA motifs including the antioxidant response elements (AREs), which regulate expression of genes involved in oxidative stress response. Activates or represses expression of target genes, depending on the context. Plays a key role in cholesterol homeostasis by acting as a sensor of cholesterol excess: in low cholesterol conditions, translocates into the nucleus and represses expression of genes involved in defense against cholesterol excess, such as CD36. In excess cholesterol conditions, the endoplasmic reticulum membrane form of the protein directly binds cholesterol via its CRAC motif, preventing cleavage and release of the transcription factor NRF1, thereby allowing expression of genes promoting cholesterol removal. Critical for redox balance in response to oxidative stress: acts by binding the AREs motifs on promoters and mediating activation of oxidative stress response genes, such as GCLC, GCLM, GSS, MT1 and MT2. Plays an essential role during fetal liver hematopoiesis: probably has a protective function against oxidative stress and is involved in lipid homeostasis in the liver. Involved in proteasome homeostasis: in response to proteasome inhibition, mediates the 'bounce-back' of proteasome subunits by translocating into the nucleus and activating expression of genes encoding proteasome subunits. Also involved in regulating glucose flux. Together with CEBPB; represses expression of DSPP during odontoblast differentiation. In response to ascorbic acid induction, activates expression of SP7/Osterix in osteoblasts. In Pongo abelii (Sumatran orangutan), this protein is Endoplasmic reticulum membrane sensor NFE2L1.